Reading from the N-terminus, the 493-residue chain is Glutamyl-tRNA(Gln) amidotransferase subunit A (493 aa).

Catalysis depends on charge relay system residues lysine 79 and serine 159. Serine 183 acts as the Acyl-ester intermediate in catalysis.

The protein belongs to the amidase family. GatA subfamily. Heterotrimer of A, B and C subunits.

It carries out the reaction L-glutamyl-tRNA(Gln) + L-glutamine + ATP + H2O = L-glutaminyl-tRNA(Gln) + L-glutamate + ADP + phosphate + H(+). In terms of biological role, allows the formation of correctly charged Gln-tRNA(Gln) through the transamidation of misacylated Glu-tRNA(Gln) in organisms which lack glutaminyl-tRNA synthetase. The reaction takes place in the presence of glutamine and ATP through an activated gamma-phospho-Glu-tRNA(Gln). The chain is Glutamyl-tRNA(Gln) amidotransferase subunit A from Brucella canis (strain ATCC 23365 / NCTC 10854 / RM-666).